We begin with the raw amino-acid sequence, 80 residues long: Large ribosomal subunit protein bL31B (80 aa).

The protein belongs to the bacterial ribosomal protein bL31 family. Type B subfamily. As to quaternary structure, part of the 50S ribosomal subunit.

The protein is Large ribosomal subunit protein bL31B of Xylella fastidiosa (strain 9a5c).